The following is a 1202-amino-acid chain: DNA-directed RNA polymerase subunit beta (1202 aa).

Belongs to the RNA polymerase beta chain family. In terms of assembly, the RNAP catalytic core consists of 2 alpha, 1 beta, 1 beta' and 1 omega subunit. When a sigma factor is associated with the core the holoenzyme is formed, which can initiate transcription.

The catalysed reaction is RNA(n) + a ribonucleoside 5'-triphosphate = RNA(n+1) + diphosphate. DNA-dependent RNA polymerase catalyzes the transcription of DNA into RNA using the four ribonucleoside triphosphates as substrates. This Leuconostoc mesenteroides subsp. mesenteroides (strain ATCC 8293 / DSM 20343 / BCRC 11652 / CCM 1803 / JCM 6124 / NCDO 523 / NBRC 100496 / NCIMB 8023 / NCTC 12954 / NRRL B-1118 / 37Y) protein is DNA-directed RNA polymerase subunit beta.